Consider the following 488-residue polypeptide: N-succinylglutamate 5-semialdehyde dehydrogenase (488 aa).

Residue 221-226 (GSSRTG) participates in NAD(+) binding. Active-site residues include E244 and C278.

It belongs to the aldehyde dehydrogenase family. AstD subfamily.

It catalyses the reaction N-succinyl-L-glutamate 5-semialdehyde + NAD(+) + H2O = N-succinyl-L-glutamate + NADH + 2 H(+). The protein operates within amino-acid degradation; L-arginine degradation via AST pathway; L-glutamate and succinate from L-arginine: step 4/5. Its function is as follows. Catalyzes the NAD-dependent reduction of succinylglutamate semialdehyde into succinylglutamate. This Pseudomonas fluorescens (strain SBW25) protein is N-succinylglutamate 5-semialdehyde dehydrogenase.